A 377-amino-acid chain; its full sequence is Cytochrome b (377 aa).

4 helical membrane-spanning segments follow: residues 33 to 53, 77 to 98, 113 to 133, and 178 to 198; these read FGSL…FLAM, WLIR…YLHT, WTMG…GYVL, and FFMI…VHLL. Positions 83 and 97 each coordinate heme b. Positions 182 and 196 each coordinate heme b. H201 provides a ligand contact to a ubiquinone. Transmembrane regions (helical) follow at residues 226 to 246, 288 to 308, 320 to 340, and 347 to 367; these read YKDL…SLLS, LGGV…PLSS, FNQI…WIGA, and FIIM…LNPM.

This sequence belongs to the cytochrome b family. The main subunits of complex b-c1 are: cytochrome b, cytochrome c1 and the Rieske protein. Requires heme b as cofactor.

It localises to the mitochondrion inner membrane. Functionally, component of the ubiquinol-cytochrome c reductase complex (complex III or cytochrome b-c1 complex) that is part of the mitochondrial respiratory chain. The b-c1 complex mediates electron transfer from ubiquinol to cytochrome c. Contributes to the generation of a proton gradient across the mitochondrial membrane that is then used for ATP synthesis. The sequence is that of Cytochrome b (MT-CYB) from Tetrodontophora bielanensis (Giant springtail).